Here is a 257-residue protein sequence, read N- to C-terminus: Ubiquinone biosynthesis O-methyltransferase (257 aa).

Arg43, Gly77, Asp98, and Met144 together coordinate S-adenosyl-L-methionine.

It belongs to the methyltransferase superfamily. UbiG/COQ3 family.

The catalysed reaction is a 3-demethylubiquinol + S-adenosyl-L-methionine = a ubiquinol + S-adenosyl-L-homocysteine + H(+). The enzyme catalyses a 3-(all-trans-polyprenyl)benzene-1,2-diol + S-adenosyl-L-methionine = a 2-methoxy-6-(all-trans-polyprenyl)phenol + S-adenosyl-L-homocysteine + H(+). It functions in the pathway cofactor biosynthesis; ubiquinone biosynthesis. O-methyltransferase that catalyzes the 2 O-methylation steps in the ubiquinone biosynthetic pathway. The protein is Ubiquinone biosynthesis O-methyltransferase of Psychrobacter cryohalolentis (strain ATCC BAA-1226 / DSM 17306 / VKM B-2378 / K5).